The following is a 782-amino-acid chain: uncharacterized protein (782 aa).

Disordered stretches follow at residues 1–127, 205–234, and 308–355; these read MTTT…SAMK, NAAA…SYNP, and PYNF…SYLR. The segment covering 24-54 has biased composition (basic and acidic residues); it reads KPQEEPTMKDKALLFEKQRQEKKMKHTEAKM. Over residues 82-118 the composition is skewed to low complexity; that stretch reads KNVNNATSTNNATSTKNNTKNTPKNTPKNIPKNTTAK. The span at 312 to 324 shows a compositional bias: polar residues; it reads ARNNHGSDVSSAM. The span at 326–336 shows a compositional bias: basic and acidic residues; it reads NARRQASETRR. Residues 337–346 show a composition bias toward polar residues; sequence SNLSSYNDRN. Residues 361–628 adopt a coiled-coil conformation; the sequence is MEKIRTEVDK…ERLRERLREL (268 aa). The segment covering 629–668 has biased composition (basic and acidic residues); sequence GSRDRSYNRSSRDRSHDRLYERSPRSRDRSSRDRSRDRYS. The interval 629-689 is disordered; that stretch reads GSRDRSYNRS…SDSVKDYSVG (61 aa). Positions 669-678 are enriched in basic residues; that stretch reads RSRSRSRYRR. Basic and acidic residues predominate over residues 679 to 689; sequence RSDSVKDYSVG.

This is an uncharacterized protein from Yarrowia lipolytica (strain CLIB 122 / E 150) (Yeast).